Here is a 185-residue protein sequence, read N- to C-terminus: Ribosome-recycling factor (185 aa).

The protein belongs to the RRF family.

Its subcellular location is the cytoplasm. Its function is as follows. Responsible for the release of ribosomes from messenger RNA at the termination of protein biosynthesis. May increase the efficiency of translation by recycling ribosomes from one round of translation to another. The polypeptide is Ribosome-recycling factor (Bacillus anthracis (strain A0248)).